The following is a 715-amino-acid chain: Elongation factor G (715 aa).

The tr-type G domain occupies 8 to 290 (NRYRNIGICA…AVIDFLPAPT (283 aa)). GTP is bound by residues 17–24 (AHVDAGKT), 88–92 (DTPGH), and 142–145 (NKMD).

The protein belongs to the TRAFAC class translation factor GTPase superfamily. Classic translation factor GTPase family. EF-G/EF-2 subfamily.

The protein resides in the cytoplasm. Catalyzes the GTP-dependent ribosomal translocation step during translation elongation. During this step, the ribosome changes from the pre-translocational (PRE) to the post-translocational (POST) state as the newly formed A-site-bound peptidyl-tRNA and P-site-bound deacylated tRNA move to the P and E sites, respectively. Catalyzes the coordinated movement of the two tRNA molecules, the mRNA and conformational changes in the ribosome. This Pseudomonas fluorescens (strain ATCC BAA-477 / NRRL B-23932 / Pf-5) protein is Elongation factor G.